The chain runs to 664 residues: DCC-interacting protein 13-beta (664 aa).

The segment at 1-428 (MPAVDKLLLE…NSEMENENDK (428 aa)) is required for RAB5A binding. The BAR domain occupies 3 to 268 (AVDKLLLEEA…ESVYTPDSDV (266 aa)). Positions 277 to 375 (LIQKAGYLNL…WICAINNISR (99 aa)) constitute a PH domain. Positions 488-637 (SLLQQMFIVR…LMLSIPLTND (150 aa)) constitute a PID domain. The segment at 643-664 (LNDQPDDDDGNPNEHRGAESEA) is disordered. Residues 654 to 664 (PNEHRGAESEA) are compositionally biased toward basic and acidic residues.

As to quaternary structure, homodimer. Homotetramer. Binds RAB5A/Rab5 through an N-terminal domain. This interaction is essential for its recruitment to endosomal membranes as well as its role in cell proliferation. Binds subunits of the NuRD/MeCP1 complex. Interacts with FSHR; interaction is independent of follicle stimulating hormone stimulation. Interacts with APPL1; the interaction is decreased by adiponectin in a time-dependent manner. Forms a complex comprising APPL1, RUVBL2, CTNNB1, HDAC1 and HDAC2; interaction reduces interaction between CTNNB1, HDAC1, HDAC2 and RUVBL2 leading to the decrease of deacetylase activity of this complex; affects the recruitment of repressive complexes to the Wnt target genes. Interacts (via BAR domain) with TBC1D1; interaction is dependent of TBC1D1 phosphorylation at 'Ser-235'; interaction diminishes the phosphorylation of TBC1D1 at 'Thr-596', resulting in inhibition of SLC2A4 translocation and glucose uptake. Interacts with ANXA2; targets APPL2 to endosomes and acting in parallel to RAB5A. Interacts with RAB31 (in GTP-bound form); interaction contributes to or enhances recruitment of APPL2 to the phagosomes; interaction enhances Fc-gamma receptor-mediated phagocytosis through PI3K/Akt signaling in macrophages. Interacts with PIK3R1; forms a complex with PIK3R1 and APPL1. Interacts (via BAR domain) with ADIPOR1; hinders the accessibility of APPL1 to ADIPOR1; negatively regulates adiponectin signaling; ADIPOQ dissociates this interaction and facilitates the recruitment of APPL1 to ADIPOR1. Interacts (via BAR domain) with ADIPOR2; ADIPOQ dissociates this interaction. As to expression, high levels in brain, heart, kidney and skeletal muscle.

The protein resides in the early endosome membrane. It localises to the nucleus. It is found in the cell membrane. The protein localises to the endosome membrane. Its subcellular location is the cytoplasm. The protein resides in the cytoplasmic vesicle. It localises to the phagosome. It is found in the cell projection. The protein localises to the ruffle. Its subcellular location is the ruffle membrane. The protein resides in the phagosome membrane. In terms of biological role, multifunctional adapter protein that binds to various membrane receptors, nuclear factors and signaling proteins to regulate many processes, such as cell proliferation, immune response, endosomal trafficking and cell metabolism. Regulates signaling pathway leading to cell proliferation through interaction with RAB5A and subunits of the NuRD/MeCP1 complex. Plays a role in immune response by modulating phagocytosis, inflammatory and innate immune responses. In macrophages, enhances Fc-gamma receptor-mediated phagocytosis through interaction with RAB31 leading to activation of PI3K/Akt signaling. In response to LPS, modulates inflammatory responses by playing a key role on the regulation of TLR4 signaling and in the nuclear translocation of RELA/NF-kappa-B p65 and the secretion of pro- and anti-inflammatory cytokines. Also functions as a negative regulator of innate immune response via inhibition of AKT1 signaling pathway by forming a complex with APPL1 and PIK3R1. Plays a role in endosomal trafficking of TGFBR1 from the endosomes to the nucleus. Plays a role in cell metabolism by regulating adiponecting ans insulin signaling pathways and adaptative thermogenesis. In muscle, negatively regulates adiponectin-simulated glucose uptake and fatty acid oxidation by inhibiting adiponectin signaling pathway through APPL1 sequestration thereby antagonizing APPL1 action. In muscles, negatively regulates insulin-induced plasma membrane recruitment of GLUT4 and glucose uptake through interaction with TBC1D1. Plays a role in cold and diet-induced adaptive thermogenesis by activating ventromedial hypothalamus (VMH) neurons throught AMPK inhibition which enhances sympathetic outflow to subcutaneous white adipose tissue (sWAT), sWAT beiging and cold tolerance. Also plays a role in other signaling pathways namely Wnt/beta-catenin, HGF and glucocorticoid receptor signaling. Positive regulator of beta-catenin/TCF-dependent transcription through direct interaction with RUVBL2/reptin resulting in the relief of RUVBL2-mediated repression of beta-catenin/TCF target genes by modulating the interactions within the beta-catenin-reptin-HDAC complex. May affect adult neurogenesis in hippocampus and olfactory system via regulating the sensitivity of glucocorticoid receptor. Required for fibroblast migration through HGF cell signaling. This chain is DCC-interacting protein 13-beta, found in Homo sapiens (Human).